We begin with the raw amino-acid sequence, 307 residues long: Recombination-associated protein RdgC (307 aa).

The protein belongs to the RdgC family.

The protein localises to the cytoplasm. The protein resides in the nucleoid. Its function is as follows. May be involved in recombination. This chain is Recombination-associated protein RdgC, found in Burkholderia orbicola (strain MC0-3).